The sequence spans 104 residues: Co-chaperonin GroES (104 aa).

Belongs to the GroES chaperonin family. Heptamer of 7 subunits arranged in a ring. Interacts with the chaperonin GroEL.

It is found in the cytoplasm. Together with the chaperonin GroEL, plays an essential role in assisting protein folding. The GroEL-GroES system forms a nano-cage that allows encapsulation of the non-native substrate proteins and provides a physical environment optimized to promote and accelerate protein folding. GroES binds to the apical surface of the GroEL ring, thereby capping the opening of the GroEL channel. The protein is Co-chaperonin GroES of Acidiphilium cryptum (strain JF-5).